Here is a 196-residue protein sequence, read N- to C-terminus: uncharacterized protein (196 aa).

A helical membrane pass occupies residues 71–87; sequence YVKLIGTGCYVAILISG.

Its subcellular location is the membrane. This is an uncharacterized protein from Dictyostelium discoideum (Social amoeba).